The following is a 715-amino-acid chain: Protein MTSS 2 (715 aa).

One can recognise an IMD domain in the interval M1–S249. A coiled-coil region spans residues H134–D156. Low complexity-rich tracts occupy residues W253–S274, S284–S295, and T312–S330. Disordered stretches follow at residues W253–P405, L420–N485, and I527–P562. At T257 the chain carries Phosphothreonine. S261 is modified (phosphoserine). Positions V331–W341 are enriched in polar residues. Basic and acidic residues predominate over residues D360–E369. S404 is subject to Phosphoserine. Residues S429 to T442 show a composition bias toward low complexity. Positions P443 to S455 are enriched in polar residues. Phosphoserine occurs at positions 542, 564, 575, 587, 597, and 602. The residue at position 606 (T606) is a Phosphothreonine. The segment at F661–D690 is disordered. Residues P687–T704 enclose the WH2 domain.

The protein belongs to the MTSS family. As to quaternary structure, interacts (via IMD domain) with RAC1; this interaction may be important to potentiate PDGF-induced RAC1 activation.

Its subcellular location is the cytoplasm. The protein resides in the cell projection. The protein localises to the ruffle. Its function is as follows. Involved in plasma membrane dynamics. Potentiated PDGF-mediated formation of membrane ruffles and lamellipodia in fibroblasts, acting via RAC1 activation. May function in actin bundling. In Mus musculus (Mouse), this protein is Protein MTSS 2 (Mtss2).